A 94-amino-acid polypeptide reads, in one-letter code: Translation initiation factor IF-1 (94 aa).

The 72-residue stretch at 1–72 folds into the S1-like domain; it reads MAKEELIQFE…EKGRLIFRHK (72 aa). Positions 71-94 are disordered; it reads HKDERPGGTGAPRSGPPRGQFRRR.

This sequence belongs to the IF-1 family. In terms of assembly, component of the 30S ribosomal translation pre-initiation complex which assembles on the 30S ribosome in the order IF-2 and IF-3, IF-1 and N-formylmethionyl-tRNA(fMet); mRNA recruitment can occur at any time during PIC assembly.

It is found in the cytoplasm. Functionally, one of the essential components for the initiation of protein synthesis. Stabilizes the binding of IF-2 and IF-3 on the 30S subunit to which N-formylmethionyl-tRNA(fMet) subsequently binds. Helps modulate mRNA selection, yielding the 30S pre-initiation complex (PIC). Upon addition of the 50S ribosomal subunit IF-1, IF-2 and IF-3 are released leaving the mature 70S translation initiation complex. This is Translation initiation factor IF-1 from Rhodopseudomonas palustris (strain HaA2).